A 901-amino-acid polypeptide reads, in one-letter code: Cyanophycin synthetase (901 aa).

The ATP-grasp domain maps to 224 to 478 (KRILAASGVP…VAGAVMDMLF (255 aa)). An ATP-binding site is contributed by 493-499 (GTNGKTT).

This sequence in the C-terminal section; belongs to the MurCDEF family. As to quaternary structure, homodimer.

It catalyses the reaction [L-4-(L-arginin-2-N-yl)aspartate](n) + L-aspartate + ATP = [L-4-(L-arginin-2-N-yl)aspartate](n)-L-aspartate + ADP + phosphate + H(+). The catalysed reaction is [L-4-(L-arginin-2-N-yl)aspartate](n)-L-aspartate + L-arginine + ATP = [L-4-(L-arginin-2-N-yl)aspartate](n+1) + ADP + phosphate + H(+). Functionally, catalyzes the ATP-dependent polymerization of arginine and aspartate to multi-L-arginyl-poly-L-aspartic acid (cyanophycin; a water-insoluble reserve polymer). In Nostoc sp. (strain PCC 7120 / SAG 25.82 / UTEX 2576), this protein is Cyanophycin synthetase (cphA).